A 164-amino-acid polypeptide reads, in one-letter code: Urease subunit beta (164 aa).

Composition is skewed to polar residues over residues 1 to 10 and 20 to 30; these read MSTKTNSTKA and TNRGTKSSAGY. Residues 1 to 30 form a disordered region; it reads MSTKTNSTKATSEKTDSLKTNRGTKSSAGY.

This sequence belongs to the urease beta subunit family. As to quaternary structure, heterotrimer of UreA (gamma), UreB (beta) and UreC (alpha) subunits. Three heterotrimers associate to form the active enzyme.

It is found in the cytoplasm. It catalyses the reaction urea + 2 H2O + H(+) = hydrogencarbonate + 2 NH4(+). It functions in the pathway nitrogen metabolism; urea degradation; CO(2) and NH(3) from urea (urease route): step 1/1. In terms of biological role, expression of the urease operon increases the likelihood of bacterial survival by contributing to acid resistance in vitro and in vivo in BALB/c mice. Y.enterocolitica enters the body via an oral path and must survive the acidic stomach before being able to colonize the intestinal mucosa. The protein is Urease subunit beta of Yersinia enterocolitica.